A 185-amino-acid chain; its full sequence is Peptidyl-tRNA hydrolase (185 aa).

Residue Y14 coordinates tRNA. The active-site Proton acceptor is H19. The tRNA site is built by Y64, N66, and N112.

It belongs to the PTH family. Monomer.

The protein resides in the cytoplasm. It carries out the reaction an N-acyl-L-alpha-aminoacyl-tRNA + H2O = an N-acyl-L-amino acid + a tRNA + H(+). In terms of biological role, hydrolyzes ribosome-free peptidyl-tRNAs (with 1 or more amino acids incorporated), which drop off the ribosome during protein synthesis, or as a result of ribosome stalling. Catalyzes the release of premature peptidyl moieties from peptidyl-tRNA molecules trapped in stalled 50S ribosomal subunits, and thus maintains levels of free tRNAs and 50S ribosomes. The chain is Peptidyl-tRNA hydrolase from Lactobacillus acidophilus (strain ATCC 700396 / NCK56 / N2 / NCFM).